A 1067-amino-acid chain; its full sequence is Probable isoleucine--tRNA ligase, cytoplasmic (1067 aa).

A 'HIGH' region motif is present at residues 47 to 57; sequence PFATGLPHYGH. The 'KMSKS' region signature appears at 604 to 608; the sequence is KMSKR. An ATP-binding site is contributed by Lys607.

The protein belongs to the class-I aminoacyl-tRNA synthetase family.

It localises to the cytoplasm. It catalyses the reaction tRNA(Ile) + L-isoleucine + ATP = L-isoleucyl-tRNA(Ile) + AMP + diphosphate. The polypeptide is Probable isoleucine--tRNA ligase, cytoplasmic (ileS) (Dictyostelium discoideum (Social amoeba)).